A 1450-amino-acid chain; its full sequence is MITTYSTFLFNFLSQFQYLVNIPEPLILFGLYYGFLTTLPISFSHIVVIRNRLIEGKTSSVMAFCGLITGQLCMIGTIYYTPLYKLFIKPHLILLLSIIYSFFYWQRLRNNQNYDDLREAQSLINVRNFFSFFDSFVFQILNPILLPTPIFFRLNNVFLFRYSNNLNFFLSFFIGSLIGNFLFFNALNWIRYRFEQDSNVIYPVLKLLINKSIIPIVFCICLIPIAKYSHIPFCTMKQKEGQSSYSFDKNWPNIIFDSNQPHRPIRIFSETKTDDNLNINDNLSKKQTSQFFFKECISDGNVRISYTYPSTLANFQTDLSSSFQDFSLSEQSFDNLYSNWKLEKLSRKDNLNNLLLTKIKLLNNKKEWFYKHFQNKFGTFIKDDNNYNKFVKKSNDVRLKQSSKIQIKKSKLLTSDIRDISTTQSGFYDLKKNKLKSFISQKFKMNSNNSTLPVWNHLNKQLLQNELKRIKKQLQDKTKNIKENDFNNLKLLKSNIETIDNTINDIHHNKIKQITSVDLIKIFATNNKTLLLETLAFNKKITQKDNFNFNKLFQHKNKKFTTNSGNENTYLNLNDIFKNIKRLPKWRTFSKHVVYDEVSDIRRRAIKSNSKLKIANKDSDIIIFEYKKSLNFRARLPKGSLRARRKNKFTWKLFHNNLNSPFFIRSKQLLNKTDIPFLKYNENYLNFFKNFISPDKNINYLNNDISEMRRQELLFKWDKTNVHILRSMVLVGQAFFRKYIKLPIFIFFKNLSRQLLYQPSEWTKDWSNWMNEWYIFCYYDGTELAKDQWPEMWLQRGIQIKLINPFYIKPWYIQKSFIKNKQNKKTRTSYLTVFGSQQELPFGKKIRMPSFWKPVRREVSKSIKLKLYFPFLTLQKNTIILFEKVFNKKRINEDNKTIEKSILNKKNEQLILKKDEVIPNNKSIAGKLSKLDFHNQNITKTSIKNATKQILIKNEYNSLLKENKNLFTKNKIVFLKIKNILNKLNLKLIKVKINFTYKIKTVLKIISRNLLKFYSIIQFQLENLGRNNSNDLSYKNQLSYQKDFPNFNNFCLNQANIIQNLCKNNILKHKKLNQNFQINSKNLNQTNIIDVNPENIKAQDFKNLLENIYTFTPTINLWDKLSTNNWKISVQNNWKQKSYNNYDLTKKALVSKNLNFISYFYQNNLINNLNKKIKHTKIFNLSKNYLSLNNLNQNQIKNFDFQNSLNNNITYKKNIKNFTIRQNVPSQLRRWDWKNNKIKKFVNRLLQKNTILLKEEVFNLIPFFDRFTIQNPMIRNWSHPISSILDDEIFTYELLDTFLQINKNIDFLHTKQIEDNLSSNSNQAIASLPLSSTTAENFLYYLTTVEDLISIEDKKELKILNSLNFNKSTPNYIKTNVVEKSLNENLSKNLQSILSKETLDSINNTQILKKFLWASYRCEDLACMNRFWFSTNNGSRFGTLRLRLYPNLKN.

6 helical membrane-spanning segments follow: residues phenylalanine 29–isoleucine 49, valine 61–threonine 81, leucine 86–glutamine 106, phenylalanine 132–phenylalanine 152, leucine 166–alanine 186, and isoleucine 213–phenylalanine 233.

This sequence belongs to the TIC214 family. As to quaternary structure, part of the Tic complex.

It is found in the plastid. Its subcellular location is the chloroplast inner membrane. Involved in protein precursor import into chloroplasts. May be part of an intermediate translocation complex acting as a protein-conducting channel at the inner envelope. The polypeptide is Protein TIC 214 (Chaetosphaeridium globosum (Charophycean green alga)).